A 422-amino-acid polypeptide reads, in one-letter code: MSNLEQAERIKNLTKDHHNWMKNSLNLIASENITSRAVREAVASDLSHRYAEGLPGERLYEGCDYIDAIEEETIALSKKLYDAEHVNVQPTSGVVANLASFFALTKPGDLLMSINVPEGGHISHASVSAAGIRGLKISSVPMDDSIMNVDIDKTLSKIREKEPKAIVLGGSLFLFPQPVSEVADVAKEVGAKIIYDAAHVLGLIAGKRFQDPVKEGADIVTGSTHKTFPGPQGGIILCKEEIGRKVDNCVFPGVVSNHHLHHMAALGVATAEMLEFGKDYANQTISNAKALAQALYERGFNVLCEDQGFTESHQVAMDVAKLGDVSKMAKTLQYNNIILNKNLLPWDDVNDSDNPSGIRMGTQELTHRGFKEDEMDQVAEFIKQVVMDKKDVKEDVTEFMQDYTTVHYAFDEGCEGYDYIEF.

120–122 (GHI) is a (6S)-5,6,7,8-tetrahydrofolate binding site. Residue lysine 226 is modified to N6-(pyridoxal phosphate)lysine. Glutamate 241 contributes to the (6S)-5,6,7,8-tetrahydrofolate binding site.

It belongs to the SHMT family. In terms of assembly, homodimer. The cofactor is pyridoxal 5'-phosphate.

The protein localises to the cytoplasm. The enzyme catalyses 5,10-methylenetetrahydromethanopterin + glycine + H2O = 5,6,7,8-tetrahydromethanopterin + L-serine. Its pathway is amino-acid biosynthesis; glycine biosynthesis; glycine from L-serine: step 1/1. Catalyzes the reversible interconversion of serine and glycine with tetrahydromethanopterin (H4MPT) serving as the one-carbon carrier. Also exhibits a pteridine-independent aldolase activity toward beta-hydroxyamino acids, producing glycine and aldehydes, via a retro-aldol mechanism. This is Serine hydroxymethyltransferase from Methanosphaera stadtmanae (strain ATCC 43021 / DSM 3091 / JCM 11832 / MCB-3).